Reading from the N-terminus, the 222-residue chain is Vacuolar protein sorting-associated protein 2 homolog 2 (222 aa).

Coiled-coil stretches lie at residues 26-83 (RGIE…AQIR) and 143-222 (SEAI…LRRI). A disordered region spans residues 179–222 (SSAPKGRIATKTAAPPASTAATNKNSESSEVDELEKRLASLRRI). Over residues 187–203 (ATKTAAPPASTAATNKN) the composition is skewed to low complexity.

The protein belongs to the SNF7 family. In terms of assembly, component of the endosomal sorting required for transport complex III (ESCRT-III), composed at least of VPS2, VPS20, VPS24 and VPS32. Interacts with CHMP1A, CHMP1B and VPS60-1.

Its subcellular location is the endosome. Its function is as follows. Component of the ESCRT-III complex, which is required for multivesicular bodies (MVBs) formation and sorting of endosomal cargo proteins into MVBs. The ESCRT-III complex is probably involved in the concentration of MVB cargo. The chain is Vacuolar protein sorting-associated protein 2 homolog 2 (VPS2.2) from Arabidopsis thaliana (Mouse-ear cress).